The chain runs to 372 residues: Glutamate 5-kinase (372 aa).

Lys-14 serves as a coordination point for ATP. Residues Ser-54, Asp-141, and Asn-153 each coordinate substrate. 173–174 is an ATP binding site; the sequence is TD. One can recognise a PUA domain in the interval 280–358; the sequence is AGRIVLDQGA…TDILSILGFV (79 aa).

This sequence belongs to the glutamate 5-kinase family.

Its subcellular location is the cytoplasm. It catalyses the reaction L-glutamate + ATP = L-glutamyl 5-phosphate + ADP. The protein operates within amino-acid biosynthesis; L-proline biosynthesis; L-glutamate 5-semialdehyde from L-glutamate: step 1/2. Functionally, catalyzes the transfer of a phosphate group to glutamate to form L-glutamate 5-phosphate. In Herminiimonas arsenicoxydans, this protein is Glutamate 5-kinase.